A 123-amino-acid polypeptide reads, in one-letter code: UPF0102 protein Fjoh_1217 (123 aa).

Belongs to the UPF0102 family.

In Flavobacterium johnsoniae (strain ATCC 17061 / DSM 2064 / JCM 8514 / BCRC 14874 / CCUG 350202 / NBRC 14942 / NCIMB 11054 / UW101) (Cytophaga johnsonae), this protein is UPF0102 protein Fjoh_1217.